Consider the following 76-residue polypeptide: Potassium/proton antiporter CemA (76 aa).

The chain crosses the membrane as a helical span at residues 35 to 52; that stretch reads QILSCLVSIFPVILDTIF.

This sequence belongs to the CemA family.

The protein localises to the plastid. Its subcellular location is the chloroplast inner membrane. The enzyme catalyses K(+)(in) + H(+)(out) = K(+)(out) + H(+)(in). Functionally, contributes to K(+)/H(+) antiport activity by supporting proton efflux to control proton extrusion and homeostasis in chloroplasts in a light-dependent manner to modulate photosynthesis. Prevents excessive induction of non-photochemical quenching (NPQ) under continuous-light conditions. Indirectly promotes efficient inorganic carbon uptake into chloroplasts. The protein is Potassium/proton antiporter CemA of Vicia faba (Broad bean).